Reading from the N-terminus, the 357-residue chain is MSLTRLLIRDFRNIETADLALSPGFNFLVGANGSGKTSVLEAIYTLGHGRAFRSLQIGRVIRHEQEAFVLHGRLQGEERETAIGLTKDKQGDSKVRIDGTDGHKVAELAHLMPMQLITPEGFTLLNGGPKYRRAFLDWACFHNEPGFFTAWSNLKRLLKQRNAALRQVTRYEQLRPWDKELIPLVEQISTWRAEYSAGIAADMADTCKQFLPEFSLTFSFQRGWEKETEYAEVLERNFERDRQLTYTAHGPHKADLRIRADGAPVEDTLSRGQLKLLMCALRLAQGEFLTRESGRRCLYLIDDFASELDDERRGLLASRLKATQSQVFVSAISAEHVIDMSDENSKMFTVEKGKITD.

An ATP-binding site is contributed by 30–37; sequence GANGSGKT.

It belongs to the RecF family.

It localises to the cytoplasm. Its function is as follows. The RecF protein is involved in DNA metabolism; it is required for DNA replication and normal SOS inducibility. RecF binds preferentially to single-stranded, linear DNA. It also seems to bind ATP. This chain is DNA replication and repair protein RecF, found in Shigella boydii serotype 4 (strain Sb227).